Here is a 788-residue protein sequence, read N- to C-terminus: Integrin beta-6 (788 aa).

Positions 1-21 (MGIELLCLFFLCLGRNDHVQG) are cleaved as a signal peptide. Residues 22-71 (GCAVGGAETCEDCLLIGPQCAWCSQENFTHLSGVGERCDTPANLLAKGCQ) form the PSI domain. Over 22–709 (GCAVGGAETC…KDCPKPPNIP (688 aa)) the chain is Extracellular. Cystine bridges form between cysteine 23–cysteine 41, cysteine 31–cysteine 454, cysteine 34–cysteine 59, cysteine 44–cysteine 70, cysteine 197–cysteine 204, cysteine 252–cysteine 293, cysteine 394–cysteine 406, cysteine 426–cysteine 452, cysteine 456–cysteine 476, cysteine 467–cysteine 479, cysteine 481–cysteine 490, cysteine 492–cysteine 519, cysteine 502–cysteine 517, cysteine 511–cysteine 522, cysteine 524–cysteine 537, cysteine 539–cysteine 560, cysteine 544–cysteine 558, cysteine 552–cysteine 563, and cysteine 565–cysteine 574. Residues asparagine 48 and asparagine 97 are each glycosylated (N-linked (GlcNAc...) asparagine). Positions 131 to 371 (YPVDLYYLMD…QLIISAYEEL (241 aa)) constitute a VWFA domain. Mg(2+) contacts are provided by aspartate 140, serine 142, and serine 144. Ca(2+) contacts are provided by serine 144, aspartate 147, aspartate 148, and glutamate 179. Positions 235, 237, 239, and 240 each coordinate Ca(2+). Residue glutamate 240 coordinates Mg(2+). Asparagine 260 is a glycosylation site (N-linked (GlcNAc...) asparagine). Ca(2+) contacts are provided by aspartate 271 and lysine 355. Asparagine 387 is a glycosylation site (N-linked (GlcNAc...) asparagine). N-linked (GlcNAc...) asparagine glycosylation is present at asparagine 418. 4 I-EGF domains span residues 456-491 (CQKE…HHCE), 492-538 (CGED…PYCQ), 539-575 (CDNF…EYCN), and 576-615 (CTTS…PTCE). 2 N-linked (GlcNAc...) asparagine glycosylation sites follow: asparagine 463 and asparagine 471. Asparagine 541 is a glycosylation site (N-linked (GlcNAc...) asparagine). Residue asparagine 575 is glycosylated (N-linked (GlcNAc...) asparagine). 9 disulfides stabilise this stretch: cysteine 576–cysteine 599, cysteine 583–cysteine 597, cysteine 591–cysteine 602, cysteine 604–cysteine 614, cysteine 617–cysteine 620, cysteine 624–cysteine 670, cysteine 630–cysteine 649, cysteine 633–cysteine 645, and cysteine 678–cysteine 702. Residues 710-730 (MIMLGVSLAILLIGVVLLCIW) traverse the membrane as a helical segment. The tract at residues 731–758 (KLLVSFHDRKEVAKFEAERSKAKWQTGT) is interaction with HAX1. Over 731-788 (KLLVSFHDRKEVAKFEAERSKAKWQTGTNPLYRGSTSTFKNVTYKHKEKQKVDLSTDG) the chain is Cytoplasmic.

The protein belongs to the integrin beta chain family. As to quaternary structure, heterodimer of an alpha and a beta subunit. Interacts with FLNB. Interacts with HAX1. ITGAV:ITGB6 interacts with FBN1. ITGAV:ITGB6 interacts with TGFB1.

The protein resides in the cell membrane. Its subcellular location is the cell junction. The protein localises to the focal adhesion. Its function is as follows. Integrin alpha-V:beta-6 (ITGAV:ITGB6) is a receptor for fibronectin and cytotactin. It recognizes the sequence R-G-D in its ligands. ITGAV:ITGB6 acts as a receptor for fibrillin-1 (FBN1) and mediates R-G-D-dependent cell adhesion to FBN1. Integrin alpha-V:beta-6 (ITGAV:ITGB6) mediates R-G-D-dependent release of transforming growth factor beta-1 (TGF-beta-1) from regulatory Latency-associated peptide (LAP), thereby playing a key role in TGF-beta-1 activation. This Bos taurus (Bovine) protein is Integrin beta-6 (ITGB6).